Reading from the N-terminus, the 463-residue chain is Argininosuccinate lyase (463 aa).

It belongs to the lyase 1 family. Argininosuccinate lyase subfamily.

Its subcellular location is the cytoplasm. The catalysed reaction is 2-(N(omega)-L-arginino)succinate = fumarate + L-arginine. The protein operates within amino-acid biosynthesis; L-arginine biosynthesis; L-arginine from L-ornithine and carbamoyl phosphate: step 3/3. This Thermosynechococcus vestitus (strain NIES-2133 / IAM M-273 / BP-1) protein is Argininosuccinate lyase.